The sequence spans 124 residues: MATINQLVNNPRKRSVVKSKVPALKACPQRRGVCTRVYTTTPKKPNSALRKVARVRLTSGFEVTSYIGGEGHNLQEHSVVLIRGGRVKDLPGVRYHIVRGALDTSGVNNRKHGRSKYGTKRPKS.

D89 carries the post-translational modification 3-methylthioaspartic acid. Residues 102–124 (LDTSGVNNRKHGRSKYGTKRPKS) form a disordered region. Residues 109-124 (NRKHGRSKYGTKRPKS) show a composition bias toward basic residues.

The protein belongs to the universal ribosomal protein uS12 family. In terms of assembly, part of the 30S ribosomal subunit. Contacts proteins S8 and S17. May interact with IF1 in the 30S initiation complex.

Its function is as follows. With S4 and S5 plays an important role in translational accuracy. In terms of biological role, interacts with and stabilizes bases of the 16S rRNA that are involved in tRNA selection in the A site and with the mRNA backbone. Located at the interface of the 30S and 50S subunits, it traverses the body of the 30S subunit contacting proteins on the other side and probably holding the rRNA structure together. The combined cluster of proteins S8, S12 and S17 appears to hold together the shoulder and platform of the 30S subunit. In Francisella tularensis subsp. novicida (strain U112), this protein is Small ribosomal subunit protein uS12.